Consider the following 269-residue polypeptide: Bis(5'-nucleosyl)-tetraphosphatase, symmetrical (269 aa).

Belongs to the Ap4A hydrolase family.

The enzyme catalyses P(1),P(4)-bis(5'-adenosyl) tetraphosphate + H2O = 2 ADP + 2 H(+). Hydrolyzes diadenosine 5',5'''-P1,P4-tetraphosphate to yield ADP. This chain is Bis(5'-nucleosyl)-tetraphosphatase, symmetrical, found in Vibrio vulnificus (strain CMCP6).